Reading from the N-terminus, the 403-residue chain is RNA-binding motif, single-stranded-interacting protein 1 (403 aa).

Residues 30–56 (PAHPMAPPSPSTTSSNNNSSSSSNSGW) are disordered. Residues 40–54 (STTSSNNNSSSSSNS) are compositionally biased toward low complexity. 2 RRM domains span residues 62–135 (TNLY…MAKQ) and 141–226 (TNLY…FADG). A Phosphothreonine modification is found at T208.

The protein localises to the nucleus. In terms of biological role, single-stranded DNA binding protein that interacts with the region upstream of the C-myc gene. Binds specifically to the DNA sequence motif 5'-[AT]CT[AT][AT]T-3'. Probably has a role in DNA replication. The polypeptide is RNA-binding motif, single-stranded-interacting protein 1 (RBMS1) (Bos taurus (Bovine)).